The sequence spans 85 residues: Protein C4 (85 aa).

The N-myristoyl glycine; by host moiety is linked to residue Gly2. Positions 42-65 are disordered; that stretch reads LNPAPTSTPTSTRTETLSNGENSR. The segment covering 44–59 has biased composition (low complexity); sequence PAPTSTPTSTRTETLS.

It belongs to the geminiviridae protein AC4/C4 family.

It localises to the host cell membrane. Functionally, pathogenicity determinant. May act as a suppressor of RNA-mediated gene silencing, also known as post-transcriptional gene silencing (PTGS), a mechanism of plant viral defense that limits the accumulation of viral RNAs. The sequence is that of Protein C4 from Solanum lycopersicum (Tomato).